The sequence spans 389 residues: Nuclear receptor subfamily 2 group F member 1-B (389 aa).

The interval 19–39 (DDQSAAGREHLQHRHSPKSAE) is disordered. A DNA-binding region (nuclear receptor) is located at residues 51–126 (HVECVVCGDK…VGMRREAVQR (76 aa)). 2 consecutive NR C4-type zinc fingers follow at residues 54 to 74 (CVVCGDKSSGKHYGQFTCEGC) and 90 to 109 (CRANRNCPVDQHHRNQCQYC). In terms of domain architecture, NR LBD spans 152 to 378 (YLSGYISLLL…TLIRDMLLSG (227 aa)).

Belongs to the nuclear hormone receptor family. NR2 subfamily. As to expression, expressed the retina, where expression is restricted to the outer nuclear layer.

The protein localises to the nucleus. Functionally, putative transcription factor that is required in photoreceptor cells precursors during eye development. The polypeptide is Nuclear receptor subfamily 2 group F member 1-B (Danio rerio (Zebrafish)).